A 415-amino-acid polypeptide reads, in one-letter code: Interleukin-5 receptor subunit alpha (415 aa).

Positions 1–17 (MVPVLLILVGALATLQA) are cleaved as a signal peptide. Residues 18–339 (DLLNHKKFLL…KERKSLVEWH (322 aa)) are Extracellular-facing. Residues 29-120 (PPVNFTIKAT…VSAELKAPPG (92 aa)) form the Fibronectin type-III 1 domain. N-linked (GlcNAc...) asparagine glycosylation is found at N32 and N128. Disulfide bonds link C131-C152 and C179-C193. N213 and N241 each carry an N-linked (GlcNAc...) asparagine glycan. Residues 238–331 (PPRNVTVEIE…WSQPIYVGKE (94 aa)) form the Fibronectin type-III 2 domain. The cysteines at positions 266 and 313 are disulfide-linked. The WSXWS motif motif lies at 319–323 (WGEWS). Residues 340–361 (LIVLPTAACFVLLIFSLICRVC) traverse the membrane as a helical segment. At 362–415 (HLWTRLFPPVPAPKSNIKDLPVVTEYEKPSNETKIEVVHCVEEVGFEVMGNSTF) the chain is on the cytoplasmic side. The short motif at 367 to 375 (LFPPVPAPK) is the Box 1 motif element.

As to quaternary structure, interacts with IL5. Interacts with CSF2RB. Interacts with JAK2. Interacts with SDCBP. In terms of tissue distribution, expressed on eosinophils and basophils. Also on B-cells.

It is found in the membrane. In terms of biological role, cell surface receptor that plays an important role in the survival, differentiation, and chemotaxis of eosinophils. Acts by forming a heterodimeric receptor with CSF2RB subunit and subsequently binding to interleukin-5. In unstimulated conditions, interacts constitutively with JAK2. Heterodimeric receptor activation leads to JAK2 stimulation and subsequent activation of the JAK-STAT pathway. This is Interleukin-5 receptor subunit alpha (Il5ra) from Mus musculus (Mouse).